A 154-amino-acid chain; its full sequence is Phosphopantetheine adenylyltransferase (154 aa).

Substrate is bound at residue Thr10. Residues 10-11 (TF) and His18 each bind ATP. Substrate-binding residues include Lys42, Leu74, and Arg88. ATP is bound by residues 89–91 (GLR), Glu99, and 124–130 (NAFISSS).

This sequence belongs to the bacterial CoaD family. In terms of assembly, homohexamer. Requires Mg(2+) as cofactor.

The protein localises to the cytoplasm. It carries out the reaction (R)-4'-phosphopantetheine + ATP + H(+) = 3'-dephospho-CoA + diphosphate. It functions in the pathway cofactor biosynthesis; coenzyme A biosynthesis; CoA from (R)-pantothenate: step 4/5. Reversibly transfers an adenylyl group from ATP to 4'-phosphopantetheine, yielding dephospho-CoA (dPCoA) and pyrophosphate. This Nautilia profundicola (strain ATCC BAA-1463 / DSM 18972 / AmH) protein is Phosphopantetheine adenylyltransferase.